The chain runs to 336 residues: Protein YIPF3 (336 aa).

Residues 1 to 73 (MSAPGGGRSG…AGAGGEEDGE (73 aa)) are disordered. Topologically, residues 1 to 143 (MSAPGGGRSG…PVKMINFPQK (143 aa)) are cytoplasmic. The segment covering 55–73 (EEEEEAEGEAGAGGEEDGE) has biased composition (acidic residues). A helical transmembrane segment spans residues 144–164 (IAGELYGPLMLVFTLVAILLH). Residues 165 to 182 (GMKTSDTIIREGTLMGTA) lie on the Lumenal side of the membrane. A helical membrane pass occupies residues 183 to 203 (IGTCFGYWLGVSSFIYFLAYL). Over 204-209 (CNAQIT) the chain is Cytoplasmic. Residues 210–230 (MVQMLSLLGYGLFGHCITLLV) form a helical membrane-spanning segment. The Lumenal segment spans residues 231–239 (TYNIHFHSL). The chain crosses the membrane as a helical span at residues 240-260 (FYIFWLVVGGLSTLRMVAVLV). Residues 261-269 (SRTVGHTQR) lie on the Cytoplasmic side of the membrane. A helical membrane pass occupies residues 270–290 (LILCGTLAALHMLFLLYLHFA). The Lumenal portion of the chain corresponds to 291-336 (YHKVVEGILDTLEGPNMPPFQRVARDIPVVSNAVLNTTAKANAMTL). N-linked (GlcNAc...) asparagine glycosylation occurs at asparagine 326.

The protein belongs to the YIP1 family.

It localises to the cell membrane. The protein localises to the golgi apparatus. The protein resides in the cis-Golgi network membrane. Its subcellular location is the cytoplasm. Involved in the maintenance of the Golgi structure. May play a role in hematopoiesis. The chain is Protein YIPF3 (YIPF3) from Gallus gallus (Chicken).